The following is a 261-amino-acid chain: Thiamine thiazole synthase (261 aa).

NAD(+) is bound by residues alanine 33, 52-53 (ER), glycine 60, valine 124, and 152-154 (HVD). Residues aspartate 154 and histidine 169 each coordinate Fe cation. Isoleucine 219 serves as a coordination point for NAD(+). Arginine 229 lines the glycine pocket.

It belongs to the THI4 family. As to quaternary structure, homooctamer; tetramer of dimers. Fe(2+) serves as cofactor.

The catalysed reaction is hydrogen sulfide + glycine + NAD(+) = ADP-5-ethyl-4-methylthiazole-2-carboxylate + nicotinamide + 3 H2O + H(+). It functions in the pathway cofactor biosynthesis; thiamine diphosphate biosynthesis. Functionally, involved in the biosynthesis of the thiazole moiety of thiamine. Catalyzes the conversion of NAD and glycine to adenosine diphosphate 5-(2-hydroxyethyl)-4-methylthiazole-2-carboxylate (ADT), an adenylated thiazole intermediate, using free sulfide as a source of sulfur. The sequence is that of Thiamine thiazole synthase from Pyrobaculum calidifontis (strain DSM 21063 / JCM 11548 / VA1).